A 391-amino-acid polypeptide reads, in one-letter code: Processive diacylglycerol beta-glucosyltransferase (391 aa).

This sequence belongs to the glycosyltransferase 28 family. UgtP subfamily.

It localises to the cell membrane. The enzyme catalyses a 1,2-diacyl-3-O-(beta-D-glucopyranosyl)-sn-glycerol + UDP-alpha-D-glucose = a 1,2-diacyl-3-O-(beta-D-Glc-(1-&gt;6)-beta-D-Glc)-sn-glycerol + UDP + H(+). It catalyses the reaction a 1,2-diacyl-sn-glycerol + UDP-alpha-D-glucose = a 1,2-diacyl-3-O-(beta-D-glucopyranosyl)-sn-glycerol + UDP + H(+). The protein operates within glycolipid metabolism; diglucosyl-diacylglycerol biosynthesis. Its function is as follows. Processive glucosyltransferase involved in the biosynthesis of both the bilayer- and non-bilayer-forming membrane glucolipids. Is able to successively transfer two glucosyl residues to diacylglycerol (DAG), thereby catalyzing the formation of beta-monoglucosyl-DAG (3-O-(beta-D-glucopyranosyl)-1,2-diacyl-sn-glycerol) and beta-diglucosyl-DAG (3-O-(beta-D-glucopyranosyl-beta-(1-&gt;6)-D-glucopyranosyl)-1,2-diacyl-sn-glycerol). Beta-diglucosyl-DAG is the predominant glycolipid found in Bacillales and is also used as a membrane anchor for lipoteichoic acid (LTA). This Staphylococcus aureus (strain MRSA252) protein is Processive diacylglycerol beta-glucosyltransferase.